We begin with the raw amino-acid sequence, 60 residues long: Large ribosomal subunit protein bL32 (60 aa).

The protein belongs to the bacterial ribosomal protein bL32 family.

This chain is Large ribosomal subunit protein bL32, found in Synechococcus sp. (strain JA-3-3Ab) (Cyanobacteria bacterium Yellowstone A-Prime).